The primary structure comprises 352 residues: Nicotinate-nucleotide--dimethylbenzimidazole phosphoribosyltransferase (352 aa).

Glutamate 318 serves as the catalytic Proton acceptor.

This sequence belongs to the CobT family.

The catalysed reaction is 5,6-dimethylbenzimidazole + nicotinate beta-D-ribonucleotide = alpha-ribazole 5'-phosphate + nicotinate + H(+). Its pathway is nucleoside biosynthesis; alpha-ribazole biosynthesis; alpha-ribazole from 5,6-dimethylbenzimidazole: step 1/2. Functionally, catalyzes the synthesis of alpha-ribazole-5'-phosphate from nicotinate mononucleotide (NAMN) and 5,6-dimethylbenzimidazole (DMB). In Dehalococcoides mccartyi (strain ATCC BAA-2100 / JCM 16839 / KCTC 5957 / BAV1), this protein is Nicotinate-nucleotide--dimethylbenzimidazole phosphoribosyltransferase.